A 195-amino-acid chain; its full sequence is Coiled-coil domain-containing protein 184 (195 aa).

Positions 39–68 (GMKELMEHLKAQLQALFEDVRAMRGALDEQ) form a coiled coil. Residues 98 to 175 (RQGGLGVVGN…AGLLGGDGPL (78 aa)) are disordered. Acidic residues predominate over residues 135–146 (PEDEEDDDEEEK).

The polypeptide is Coiled-coil domain-containing protein 184 (CCDC184) (Bos taurus (Bovine)).